We begin with the raw amino-acid sequence, 192 residues long: Probable thymidylate kinase (192 aa).

Residue 8–15 (GIDGSGKS) coordinates ATP.

It belongs to the thymidylate kinase family.

It carries out the reaction dTMP + ATP = dTDP + ADP. The polypeptide is Probable thymidylate kinase (Pyrobaculum aerophilum (strain ATCC 51768 / DSM 7523 / JCM 9630 / CIP 104966 / NBRC 100827 / IM2)).